The chain runs to 1383 residues: NPC intracellular cholesterol transporter 1 homolog 1 (1383 aa).

An N-terminal signal peptide occupies residues 1 to 20; sequence MKQLLIFCLLFGSIFHHGDA. 8 cysteine pairs are disulfide-bonded: C22-C76, C28-C39, C65-C111, C77-C115, C99-C246, C102-C167, C182-C187, and C235-C251. The N-linked (GlcNAc...) asparagine glycan is linked to N42. N-linked (GlcNAc...) asparagine glycosylation occurs at N231. A run of 2 helical transmembrane segments spans residues 282–302 and 353–373; these read IFVMLAFIGSLAVLLCVGFVF and PKSHFFIGCAVLIFCLPGMIY. A glycan (N-linked (GlcNAc...) asparagine) is linked at N447. 2 disulfide bridges follow: C464-C474 and C526-C541. N-linked (GlcNAc...) asparagine glycosylation occurs at N558. Helical transmembrane passes span 627–647, 665–685, 697–717, 746–766, 780–800, and 856–876; these read EIVTVVIALAFLIGYVTFSLG, ICLGMLSVIINLLSSFCSWGI, ALVVQFFVVTLLGVCRTFMVV, TMPAMFSSSLGCAFSFFIGGF, GLAVLIDVVLHCTIFLALFVW, and IITGIIFIASFITTVILSSKI. Positions 627–800 constitute an SSD domain; the sequence is EIVTVVIALA…CTIFLALFVW (174 aa). Cystine bridges form between C929–C934, C976–C1046, C977–C1005, and C988–C1002. N993 and N1082 each carry an N-linked (GlcNAc...) asparagine glycan. A run of 5 helical transmembrane segments spans residues 1126–1146, 1157–1177, 1179–1199, 1226–1246, and 1260–1280; these read IMPILTTQLFITVVGVFGIIC, ACAVICQVSNYFHIVAFMYIF, IPVNALSATNLVMSSGILIEF, IGPIILSGPVVTMAGSTMFLS, and LFLITIVSSAVHALIILPILL.

The protein belongs to the patched family.

It localises to the membrane. The catalysed reaction is cholesterol(in) = cholesterol(out). Its function is as follows. Involved in the uptake or utilization of cholesterol. Ncr-1 and ncr-2 act redundantly to prevent dauer larva formation under favorable growth conditions, and are required for the normal functioning of ADF, ASI and ASG neurons. The chain is NPC intracellular cholesterol transporter 1 homolog 1 from Caenorhabditis elegans.